The following is a 344-amino-acid chain: Lipopolysaccharide heptosyltransferase 3 (344 aa).

This sequence belongs to the glycosyltransferase 9 family.

It catalyses the reaction an L-alpha-D-Hep-(1-&gt;3)-4-O-phospho-L-alpha-D-Hep-(1-&gt;5)-[alpha-Kdo-(2-&gt;4)]-alpha-Kdo-(2-&gt;6)-lipid A + ADP-L-glycero-beta-D-manno-heptose = an L-alpha-D-Hep-(1-&gt;7)-L-alpha-D-Hep-(1-&gt;3)-4-O-phospho-L-alpha-D-Hep-(1-&gt;5)-[alpha-Kdo-(2-&gt;4)]-alpha-Kdo-(2-&gt;6)-lipid A + ADP + H(+). The catalysed reaction is L-alpha-D-Hep-(1-&gt;3)-4-O-phospho-L-alpha-D-Hep-(1-&gt;5)-[alpha-Kdo-(2-&gt;4)]-alpha-Kdo-(2-&gt;6)-lipid A (E. coli) + ADP-L-glycero-beta-D-manno-heptose = L-alpha-D-Hep-(1-&gt;7)-L-alpha-D-Hep-(1-&gt;3)-4-O-phospho-L-alpha-D-Hep-(1-&gt;5)-[alpha-Kdo-(2-&gt;4)]-alpha-Kdo-(2-&gt;6)-lipid A (E. coli) + ADP + H(+). It participates in bacterial outer membrane biogenesis; LPS core biosynthesis. Glycosyltransferase involved in the biosynthesis of the core oligosaccharide region of lipopolysaccharide (LPS). Catalyzes the addition of the third heptose unit (HepIII) to the second heptose unit (HepII) of the phospho-Hep2-Kdo2-lipid A module. This is Lipopolysaccharide heptosyltransferase 3 from Escherichia coli (strain K12).